A 305-amino-acid chain; its full sequence is Ribosomal protein L11 methyltransferase (305 aa).

Residues threonine 149, glycine 176, aspartate 198, and asparagine 240 each coordinate S-adenosyl-L-methionine.

The protein belongs to the methyltransferase superfamily. PrmA family.

The protein localises to the cytoplasm. The catalysed reaction is L-lysyl-[protein] + 3 S-adenosyl-L-methionine = N(6),N(6),N(6)-trimethyl-L-lysyl-[protein] + 3 S-adenosyl-L-homocysteine + 3 H(+). Methylates ribosomal protein L11. The polypeptide is Ribosomal protein L11 methyltransferase (Trichlorobacter lovleyi (strain ATCC BAA-1151 / DSM 17278 / SZ) (Geobacter lovleyi)).